The primary structure comprises 166 residues: Tegument protein UL55 homolog (166 aa).

Belongs to the alphaherpesvirinae HHV-1 UL55 family.

The protein resides in the virion tegument. It localises to the host nucleus matrix. The polypeptide is Tegument protein UL55 homolog (MDV070) (Gallid herpesvirus 2 (strain Chicken/Md5/ATCC VR-987) (GaHV-2)).